The primary structure comprises 90 residues: Large ribosomal subunit protein eL34 (90 aa).

The interval 38–65 (ARCGRPLGGVPRGRPPRVRRLSKTAKRP) is disordered. Over residues 51 to 62 (RPPRVRRLSKTA) the composition is skewed to basic residues.

This sequence belongs to the eukaryotic ribosomal protein eL34 family.

This is Large ribosomal subunit protein eL34 (rpl34e) from Aeropyrum pernix (strain ATCC 700893 / DSM 11879 / JCM 9820 / NBRC 100138 / K1).